A 154-amino-acid polypeptide reads, in one-letter code: NAD(P)H-quinone oxidoreductase subunit N (154 aa).

Belongs to the complex I NdhN subunit family. NDH-1 can be composed of about 15 different subunits; different subcomplexes with different compositions have been identified which probably have different functions.

Its subcellular location is the cellular thylakoid membrane. The enzyme catalyses a plastoquinone + NADH + (n+1) H(+)(in) = a plastoquinol + NAD(+) + n H(+)(out). It catalyses the reaction a plastoquinone + NADPH + (n+1) H(+)(in) = a plastoquinol + NADP(+) + n H(+)(out). Its function is as follows. NDH-1 shuttles electrons from an unknown electron donor, via FMN and iron-sulfur (Fe-S) centers, to quinones in the respiratory and/or the photosynthetic chain. The immediate electron acceptor for the enzyme in this species is believed to be plastoquinone. Couples the redox reaction to proton translocation, and thus conserves the redox energy in a proton gradient. Cyanobacterial NDH-1 also plays a role in inorganic carbon-concentration. The polypeptide is NAD(P)H-quinone oxidoreductase subunit N (Prochlorococcus marinus (strain NATL2A)).